The sequence spans 464 residues: UDP-glucose:undecaprenyl-phosphate glucose-1-phosphate transferase (464 aa).

The Cytoplasmic segment spans residues 1-15; sequence MTNLKKRERAKTNAS. A helical transmembrane segment spans residues 16-36; the sequence is LISMVQRFSDITIMFAGLWLV. Residues 37-38 lie on the Periplasmic side of the membrane; the sequence is CE. Residues 39–59 form a helical membrane-spanning segment; it reads VSGLSFLYMHLLVALITLVVF. Residues 60–80 lie on the Cytoplasmic side of the membrane; it reads QMLGGITDFYRSWRGVRAATE. The chain crosses the membrane as a helical span at residues 81–101; the sequence is FALLLQNWTLSVIFSAGLVAF. Residues 102–104 lie on the Periplasmic side of the membrane; the sequence is NND. A helical transmembrane segment spans residues 105-125; sequence FDTQLKIWLAWYALTSIGLVV. The Cytoplasmic portion of the chain corresponds to 126–278; the sequence is CRSCIRIGAG…VNRLLKRAED (153 aa). Residues 279–299 traverse the membrane as a helical segment; the sequence is IVLATLILLLISPVLCCIALA. Residues 300-464 are Periplasmic-facing; sequence VKLSSPGPVI…FKGFVNKAAY (165 aa).

This sequence belongs to the bacterial sugar transferase family.

It is found in the cell inner membrane. The catalysed reaction is di-trans,octa-cis-undecaprenyl phosphate + UDP-alpha-D-glucose = alpha-D-glucosyl di-trans,octa-cis-undecaprenyl diphosphate + UMP. The protein operates within exopolysaccharide biosynthesis; colanic acid biosynthesis. Is the initiating enzyme for colanic acid (CA) synthesis. Catalyzes the transfer of the glucose-1-phosphate moiety from UDP-Glc onto the carrier lipid undecaprenyl phosphate (C55-P), forming a phosphoanhydride bond yielding to glucosyl-pyrophosphoryl-undecaprenol (Glc-PP-C55). Also possesses a weak galactose-1-P transferase activity. The protein is UDP-glucose:undecaprenyl-phosphate glucose-1-phosphate transferase (wcaJ) of Escherichia coli (strain K12).